Consider the following 248-residue polypeptide: Triosephosphate isomerase (248 aa).

Residues Asn12 and Lys14 each contribute to the substrate site. Lys14 carries the N6-acetyllysine modification. The residue at position 68 (Tyr68) is a 3'-nitrotyrosine. The active-site Electrophile is the His96. At Ser106 the chain carries Phosphoserine. Lys142 participates in a covalent cross-link: Glycyl lysine isopeptide (Lys-Gly) (interchain with G-Cter in SUMO1). Lys149 is modified (N6-succinyllysine). N6-acetyllysine; alternate is present on Lys156. An N6-succinyllysine; alternate modification is found at Lys156. The active-site Proton acceptor is the Glu166. Thr173 carries the post-translational modification Phosphothreonine. Lys194 is modified (N6-acetyllysine; alternate). At Lys194 the chain carries N6-succinyllysine; alternate. Position 194 is an N6-methyllysine; alternate (Lys194). Position 209 is a 3'-nitrotyrosine (Tyr209). At Ser212 the chain carries Phosphoserine. The residue at position 214 (Thr214) is a Phosphothreonine. A Phosphoserine modification is found at Ser223. Lys238 carries the post-translational modification N6-acetyllysine.

It belongs to the triosephosphate isomerase family. As to quaternary structure, homodimer.

It localises to the cytoplasm. The catalysed reaction is dihydroxyacetone phosphate = methylglyoxal + phosphate. The enzyme catalyses D-glyceraldehyde 3-phosphate = dihydroxyacetone phosphate. It functions in the pathway carbohydrate degradation; glycolysis; D-glyceraldehyde 3-phosphate from glycerone phosphate: step 1/1. The protein operates within carbohydrate biosynthesis; gluconeogenesis. Functionally, triosephosphate isomerase is an extremely efficient metabolic enzyme that catalyzes the interconversion between dihydroxyacetone phosphate (DHAP) and D-glyceraldehyde-3-phosphate (G3P) in glycolysis and gluconeogenesis. In terms of biological role, it is also responsible for the non-negligible production of methylglyoxal a reactive cytotoxic side-product that modifies and can alter proteins, DNA and lipids. This is Triosephosphate isomerase (TPI1) from Sus scrofa (Pig).